A 741-amino-acid chain; its full sequence is uncharacterized protein (741 aa).

Positions 64–103 (VETLLCMLEQLTIRIEFLTKEIAQQEAAYKDIQNTQKSLV) form a coiled coil. A compositionally biased stretch (polar residues) spans 137 to 155 (FERQNRTAPLQSKVTTASL). Disordered stretches follow at residues 137–214 (FERQ…TGLP), 280–318 (RTYS…SKSS), and 330–364 (SVSS…FLTP). Low complexity-rich tracts occupy residues 161-173 (RTSM…ASRT) and 197-209 (KSKS…KSLA). Over residues 298 to 308 (SHLPNRTTEVP) the composition is skewed to polar residues. Composition is skewed to low complexity over residues 309-318 (SISKQLSKSS) and 330-344 (SVSS…TPQS). Positions 346–356 (PRAQSASTETA) are enriched in polar residues. ATP is bound at residue 499–506 (GPPGTGKT).

It belongs to the AAA ATPase family.

The protein resides in the cytoplasm. It localises to the nucleus. This is an uncharacterized protein from Schizosaccharomyces pombe (strain 972 / ATCC 24843) (Fission yeast).